The chain runs to 374 residues: Chaperone protein DnaJ (374 aa).

Residues 5-70 form the J domain; the sequence is DYYEVLGVNL…RKRASYDQFG (66 aa). The CR-type zinc finger occupies 133 to 210; it reads GLSRTIKVPT…CHGQGRQQQT (78 aa). Cys146, Cys149, Cys162, Cys165, Cys184, Cys187, Cys198, and Cys201 together coordinate Zn(2+). 4 CXXCXGXG motif repeats span residues 146-153, 162-169, 184-191, and 198-205; these read CKTCNGSG, CPRCNGSG, CSVCRGRG, and CTDCHGQG.

Belongs to the DnaJ family. As to quaternary structure, homodimer. Requires Zn(2+) as cofactor.

The protein resides in the cytoplasm. Its function is as follows. Participates actively in the response to hyperosmotic and heat shock by preventing the aggregation of stress-denatured proteins and by disaggregating proteins, also in an autonomous, DnaK-independent fashion. Unfolded proteins bind initially to DnaJ; upon interaction with the DnaJ-bound protein, DnaK hydrolyzes its bound ATP, resulting in the formation of a stable complex. GrpE releases ADP from DnaK; ATP binding to DnaK triggers the release of the substrate protein, thus completing the reaction cycle. Several rounds of ATP-dependent interactions between DnaJ, DnaK and GrpE are required for fully efficient folding. Also involved, together with DnaK and GrpE, in the DNA replication of plasmids through activation of initiation proteins. In Coxiella burnetii (strain RSA 331 / Henzerling II), this protein is Chaperone protein DnaJ.